Here is a 121-residue protein sequence, read N- to C-terminus: Large ribosomal subunit protein bL12 (121 aa).

The protein belongs to the bacterial ribosomal protein bL12 family. Homodimer. Part of the ribosomal stalk of the 50S ribosomal subunit. Forms a multimeric L10(L12)X complex, where L10 forms an elongated spine to which 2 to 4 L12 dimers bind in a sequential fashion. Binds GTP-bound translation factors.

Functionally, forms part of the ribosomal stalk which helps the ribosome interact with GTP-bound translation factors. Is thus essential for accurate translation. The polypeptide is Large ribosomal subunit protein bL12 (Xanthomonas campestris pv. campestris (strain B100)).